We begin with the raw amino-acid sequence, 348 residues long: MSEEIIRLVNVTKEYDGVQVLDNINLYILRNEFITLLGPSGCGKTTTLRIIGGFENVTGGDILFEGKKINDVPPYKRKVNTVFQQYALFPHMNVFENIAFGLRIKKVDNKAIYAKVLQVMELMNLKGFEKRNIDSLSGGQRQRVAIARAIVNEPEVLLLDEPLAALDLKLRKEMQLELKRIQQRLGITFIFVTHDQEEALTMSDTVVVMNEGKIQQIGSPIDIYNEPKNVFVADFIGESNILDGVMLQDFLVHFHGRRFDCLDKGFSANEEVDVVIRPEDLKLVAAEEGMLTGEVQSVVFKGVHYEMMIQSSEFCWMVHSTQMEEVGNEVGLRILPNDIHIMKKVKGD.

Residues 6–236 (IRLVNVTKEY…PKNVFVADFI (231 aa)) enclose the ABC transporter domain. 38-45 (GPSGCGKT) contacts ATP.

This sequence belongs to the ABC transporter superfamily. Spermidine/putrescine importer (TC 3.A.1.11.1) family. As to quaternary structure, the complex is composed of two ATP-binding proteins (PotA), two transmembrane proteins (PotB and PotC) and a solute-binding protein (PotD).

It localises to the cell membrane. It carries out the reaction ATP + H2O + polyamine-[polyamine-binding protein]Side 1 = ADP + phosphate + polyamineSide 2 + [polyamine-binding protein]Side 1.. Functionally, part of the ABC transporter complex PotABCD involved in spermidine/putrescine import. Responsible for energy coupling to the transport system. The protein is Spermidine/putrescine import ATP-binding protein PotA of Desulfitobacterium hafniense (strain Y51).